A 165-amino-acid chain; its full sequence is Basic leucine zipper 43 (165 aa).

Positions 70-133 (NERKQKRKIS…EKVIEENVQL (64 aa)) constitute a bZIP domain. The tract at residues 72–93 (RKQKRKISNRESARRSRMRKQR) is basic motif. Residues 98-112 (LWSQVMWLRDENHQL) form a leucine-zipper region.

As to quaternary structure, forms heterodimers with BZIP34 and BZIP61.

It localises to the nucleus. Its function is as follows. Probable transcription factor involved in somatic embryogenesis. Acts as a positive regulator of BHLH109. In Arabidopsis thaliana (Mouse-ear cress), this protein is Basic leucine zipper 43.